We begin with the raw amino-acid sequence, 380 residues long: 4-hydroxy-3-methylbut-2-en-1-yl diphosphate synthase (flavodoxin) (380 aa).

4 residues coordinate [4Fe-4S] cluster: Cys-280, Cys-283, Cys-315, and Glu-322.

The protein belongs to the IspG family. It depends on [4Fe-4S] cluster as a cofactor.

It carries out the reaction (2E)-4-hydroxy-3-methylbut-2-enyl diphosphate + oxidized [flavodoxin] + H2O + 2 H(+) = 2-C-methyl-D-erythritol 2,4-cyclic diphosphate + reduced [flavodoxin]. It functions in the pathway isoprenoid biosynthesis; isopentenyl diphosphate biosynthesis via DXP pathway; isopentenyl diphosphate from 1-deoxy-D-xylulose 5-phosphate: step 5/6. Its function is as follows. Converts 2C-methyl-D-erythritol 2,4-cyclodiphosphate (ME-2,4cPP) into 1-hydroxy-2-methyl-2-(E)-butenyl 4-diphosphate. The protein is 4-hydroxy-3-methylbut-2-en-1-yl diphosphate synthase (flavodoxin) of Cutibacterium acnes (strain DSM 16379 / KPA171202) (Propionibacterium acnes).